The following is a 1294-amino-acid chain: Ethylene-insensitive protein 2 (1294 aa).

Topologically, residues 1–12 (MEAEIVNVRPQL) are cytoplasmic. Residues 13 to 33 (GFIQRMVPALLPVLLVSVGYI) traverse the membrane as a helical segment. Residues 34 to 50 (DPGKWVANIEGGARFGY) lie on the Extracellular side of the membrane. Residues 51–71 (DLVAITLLFNFAAILCQYVAA) form a helical membrane-spanning segment. Residues 72–105 (RISVVTGKHLAQICNEEYDKWTCMFLGIQAEFSA) are Cytoplasmic-facing. Residues 106 to 126 (ILLDLTMVVGVAHALNLLFGV) form a helical membrane-spanning segment. A topological domain (extracellular) is located at residue Glu-127. The helical transmembrane segment at 128–148 (LSTGVFLAAMDAFLFPVFASF) threads the bilayer. Over 149–155 (LENGMAN) the chain is Cytoplasmic. The chain crosses the membrane as a helical span at residues 156-176 (TVSIYSAGLVLLLYVSGVLLS). At 177–194 (QSEIPLSMNGVLTRLNGE) the chain is on the extracellular side. A helical transmembrane segment spans residues 195-215 (SAFALMGLLGASIVPHNFYIH). Over 216–237 (SYFAGESTSSSDVDKSSLCQDH) the chain is Cytoplasmic. A helical transmembrane segment spans residues 238-258 (LFAIFGVFSGLSLVNYVLMNA). Residues 259–287 (AANVFHSTGLVVLTFHDALSLMEQVFMSP) are Extracellular-facing. The chain crosses the membrane as a helical span at residues 288 to 308 (LIPVVFLMLLFFSSQITALAW). The Cytoplasmic portion of the chain corresponds to 309–334 (AFGGEVVLHDFLKIEIPAWLHRATIR). The next 2 membrane-spanning stretches (helical) occupy residues 335–355 (ILAV…GIYQ) and 356–376 (LLIF…IPLF). Over 377 to 397 (RIASSRQIMGVHKIPQVGEFL) the chain is Cytoplasmic. The helical transmembrane segment at 398-418 (ALTTFLGFLGLNVVFVVEMVF) threads the bilayer. Residues 419–440 (GSSDWAGGLRWNTVMGTSIQYT) are Extracellular-facing. Residues 441 to 461 (TLLVSSCASLCLILWLAATPL) form a helical membrane-spanning segment. Over 462–1294 (KSASNRAEAQ…KNVTAYGSLG (833 aa)) the chain is Cytoplasmic. Disordered regions lie at residues 534-561 (TDQE…SSLK) and 623-662 (ETEE…SLSR). The segment covering 536-550 (QEIRSSPPEERELDV) has biased composition (basic and acidic residues). Phosphoserine occurs at positions 645, 659, and 757. Residue Thr-819 is modified to Phosphothreonine. Ser-924 carries the post-translational modification Phosphoserine. A Nuclear localization signal motif is present at residues 1262-1269 (LKRYKRRL). Positions 1269–1294 (LSNKPVGMNQDGPGSRKNVTAYGSLG) are disordered. Ser-1283 carries the phosphoserine modification.

The protein belongs to the NRAMP (TC 2.A.55) family. Interacts (via NLS) with ETR1. Interacts (via C-terminus) with EER5 and the COP9 signalosome subunits CSN3, CSN6A and CSN6B. Interacts with ETP1 and ETP2. Interacts with CTR1. Interacts with all members of the ethylene receptor family, including ETR1, ETR2, ERS1, ERS2 and EIN4. Binds to MRF3/ECIP1. As to quaternary structure, interacts with several P-body components, such as XRN4/EIN5, PAB2, PAB4 and PAB8. Binds to ENAP1 in the presence of ethylene; this reaction facilitates its association with histone. Post-translationally, phosphorylated by CTR1 on at least 4 sites. Phosphorylation of Ser-645 and Ser-924 is involved in repressing EIN2 signaling. Loss of phosphorylation results in nuclear localization of the C-terminus of EIN2. Localized to the guard cells after methyl jasmonate treatment.

The protein localises to the endoplasmic reticulum membrane. It is found in the nucleus. Its subcellular location is the cytoplasm. In terms of biological role, central factor in signaling pathways regulated by ethylene (ET) and involved in various processes including development, plant defense, senescence, nucleotide sugar flux, and tropisms. Necessary for ethylene-mediated gene regulation, and for the induction of some genes by ozone. Acts downstream of ET receptors, and upstream of ethylene regulated transcription factors. Required for cytokinin-mediated processes. Seems to be implicated in cross-talk between ET, jasmonate and other pathways. Probably not involved in iron uptake. Has a short half-life and undergoes rapid proteasome-mediated turnover in the absence of ethylene. Required for ethylene-induced EIN3 stabilization via proteasomal degradation of EBF1/EBF2 proteins. Regulates the leaf senescence induced by methyl jasmonate, ethylene and abscisic acid. Required during salt stress to confer resistance. Trafficking signal inducing ethylene response. The nuclear localization is both necessary and sufficient to activate EIN3-mediated transcription and ethylene responses. Involved in ethylene (ET)-mediated signaling pathways by triggering histone acetylation of H3K14 and H3K23 in an ENAP1-dependent manner, thus influencing the expression of ethylene-responsive genes. Necessary and sufficient for 3'-UTR-mediated translational repression of EBF1 and EBF2 mRNAs. Ethylene induces EIN2-CEND to associate with 3' UTRs in cytoplasmic foci and target EBF1/2 mRNAs to cytoplasmic processing-body (P-body). MPK6 regulates the cleavage and nuclear translocation of EIN2-CEND under methyl jasmonate treatment. Required for EIN3 accumulation. The sequence is that of Ethylene-insensitive protein 2 from Arabidopsis thaliana (Mouse-ear cress).